The chain runs to 151 residues: Small ribosomal subunit protein uS15 (151 aa).

It belongs to the universal ribosomal protein uS15 family. In terms of assembly, component of the small ribosomal subunit. Part of the small subunit (SSU) processome, composed of more than 70 proteins and the RNA chaperone small nucleolar RNA (snoRNA) U3.

Its subcellular location is the cytoplasm. The protein resides in the nucleus. It localises to the nucleolus. Component of the small ribosomal subunit. The ribosome is a large ribonucleoprotein complex responsible for the synthesis of proteins in the cell. Part of the small subunit (SSU) processome, first precursor of the small eukaryotic ribosomal subunit. During the assembly of the SSU processome in the nucleolus, many ribosome biogenesis factors, an RNA chaperone and ribosomal proteins associate with the nascent pre-rRNA and work in concert to generate RNA folding, modifications, rearrangements and cleavage as well as targeted degradation of pre-ribosomal RNA by the RNA exosome. The chain is Small ribosomal subunit protein uS15 (rps-13) from Caenorhabditis elegans.